A 593-amino-acid polypeptide reads, in one-letter code: NADH-quinone oxidoreductase subunit C/D (593 aa).

The interval 1 to 184 is NADH dehydrogenase I subunit C; it reads MTADSALYIP…DPYSLSAAKQ (184 aa). Residues 208–593 form an NADH dehydrogenase I subunit D region; sequence DYMFLNLGPN…IDFVMADVDR (386 aa).

In the N-terminal section; belongs to the complex I 30 kDa subunit family. The protein in the C-terminal section; belongs to the complex I 49 kDa subunit family. NDH-1 is composed of 13 different subunits. Subunits NuoB, CD, E, F, and G constitute the peripheral sector of the complex.

The protein localises to the cell inner membrane. The catalysed reaction is a quinone + NADH + 5 H(+)(in) = a quinol + NAD(+) + 4 H(+)(out). Functionally, NDH-1 shuttles electrons from NADH, via FMN and iron-sulfur (Fe-S) centers, to quinones in the respiratory chain. The immediate electron acceptor for the enzyme in this species is believed to be ubiquinone. Couples the redox reaction to proton translocation (for every two electrons transferred, four hydrogen ions are translocated across the cytoplasmic membrane), and thus conserves the redox energy in a proton gradient. The protein is NADH-quinone oxidoreductase subunit C/D of Pseudomonas aeruginosa (strain UCBPP-PA14).